A 507-amino-acid chain; its full sequence is ATP synthase subunit alpha, chloroplastic (507 aa).

170–177 is a binding site for ATP; sequence GDRQTGKA.

It belongs to the ATPase alpha/beta chains family. F-type ATPases have 2 components, CF(1) - the catalytic core - and CF(0) - the membrane proton channel. CF(1) has five subunits: alpha(3), beta(3), gamma(1), delta(1), epsilon(1). CF(0) has four main subunits: a, b, b' and c.

The protein resides in the plastid. It is found in the chloroplast thylakoid membrane. It carries out the reaction ATP + H2O + 4 H(+)(in) = ADP + phosphate + 5 H(+)(out). Functionally, produces ATP from ADP in the presence of a proton gradient across the membrane. The alpha chain is a regulatory subunit. The sequence is that of ATP synthase subunit alpha, chloroplastic from Calycanthus floridus var. glaucus (Eastern sweetshrub).